An 84-amino-acid polypeptide reads, in one-letter code: Sulfur carrier protein TusA (84 aa).

The Cysteine persulfide intermediate role is filled by cysteine 19.

This sequence belongs to the sulfur carrier protein TusA family. As to quaternary structure, interacts with IscS.

Its subcellular location is the cytoplasm. The protein operates within tRNA modification. In terms of biological role, sulfur carrier protein involved in sulfur trafficking in the cell. Part of a sulfur-relay system required for 2-thiolation during synthesis of 2-thiouridine of the modified wobble base 5-methylaminomethyl-2-thiouridine (mnm(5)s(2)U) in tRNA. Interacts with IscS and stimulates its cysteine desulfurase activity. Accepts an activated sulfur from IscS, which is then transferred to TusD, and thus determines the direction of sulfur flow from IscS to 2-thiouridine formation. Also appears to be involved in sulfur transfer for the biosynthesis of molybdopterin. The polypeptide is Sulfur carrier protein TusA (Yersinia pseudotuberculosis serotype O:1b (strain IP 31758)).